Reading from the N-terminus, the 591-residue chain is MKYILVTGGVISGIGKGIIASSVGTILKSCGLHVTSIKIDPYINIDAGTFSPYEHGEVFVLDDGGEVDLDLGNYERFLDIRLTKDNNLTTGKIYQYVINKERKGDYLGKTVQVVPHITDAIQEWVMRQALIPVDEDGLEPQVCVIELGGTVGDIESMPFIEAFRQFQFKVKRENFCNIHVSLVPQPSSTGEQKTKPTQNSVRELRGLGLSPDLVVCRCSNPLDTSVKEKISMFCHVEPEQVICVHDVSSIYRVPLLLEEQGVVDYFLRRLDLPIERQPRKMLMKWKEMADRYDRLLETCSIALVGKYTKFSDSYASVIKALEHSALAINHKLEIKYIDSADLEPITSQEEPVRYHEAWQKLCSAHGVLVPGGFGVRGTEGKIQAIAWARNQKKPFLGVCLGMQLAVVEFSRNVLGWQDANSTEFDPTTSHPVVVDMPEHNPGQMGGTMRLGKRRTLFQTKNSVMRKLYGDADYLEERHRHRFEVNPVWKKCLEEQGLKFVGQDVEGERMEIVELEDHPFFVGVQYHPEFLSRPIKPSPPYFGLLLASVGRLSHYLQKGCRLSPRDTYSDRSGSSSPDSEITELKFPSINHD.

The residue at position 100 (lysine 100) is an N6-acetyllysine. Positions serine 300–tyrosine 554 constitute a Glutamine amidotransferase type-1 domain. Active-site for GATase activity residues include cysteine 399, histidine 526, and glutamate 528. A phosphoserine mark is found at serine 562, serine 568, serine 571, serine 573, serine 574, serine 575, serine 578, and serine 587. A disordered region spans residues serine 562–aspartate 591. Over residues aspartate 569 to serine 578 the composition is skewed to low complexity.

It belongs to the CTP synthase family. In terms of tissue distribution, widely expressed.

Its subcellular location is the cytoplasm. The protein resides in the cytosol. The enzyme catalyses UTP + L-glutamine + ATP + H2O = CTP + L-glutamate + ADP + phosphate + 2 H(+). The protein operates within pyrimidine metabolism; CTP biosynthesis via de novo pathway; CTP from UDP: step 2/2. Its activity is regulated as follows. Activated by GTP and inhibited by CTP. In terms of biological role, this enzyme is involved in the de novo synthesis of CTP, a precursor of DNA, RNA and phospholipids. Catalyzes the ATP-dependent amination of UTP to CTP with either L-glutamine or ammonia as a source of nitrogen. This enzyme and its product, CTP, play a crucial role in the proliferation of activated lymphocytes and therefore in immunity. This Homo sapiens (Human) protein is CTP synthase 1.